A 217-amino-acid chain; its full sequence is Probable transaldolase (217 aa).

The active-site Schiff-base intermediate with substrate is the K83.

The protein belongs to the transaldolase family. Type 3B subfamily.

The protein resides in the cytoplasm. The enzyme catalyses D-sedoheptulose 7-phosphate + D-glyceraldehyde 3-phosphate = D-erythrose 4-phosphate + beta-D-fructose 6-phosphate. The protein operates within carbohydrate degradation; pentose phosphate pathway; D-glyceraldehyde 3-phosphate and beta-D-fructose 6-phosphate from D-ribose 5-phosphate and D-xylulose 5-phosphate (non-oxidative stage): step 2/3. In terms of biological role, transaldolase is important for the balance of metabolites in the pentose-phosphate pathway. The sequence is that of Probable transaldolase from Rhizobium meliloti (strain 1021) (Ensifer meliloti).